A 204-amino-acid chain; its full sequence is Elongation factor Ts (204 aa).

The segment at Thr-87 to Val-90 is involved in Mg(2+) ion dislocation from EF-Tu.

Belongs to the EF-Ts family.

It localises to the cytoplasm. Associates with the EF-Tu.GDP complex and induces the exchange of GDP to GTP. It remains bound to the aminoacyl-tRNA.EF-Tu.GTP complex up to the GTP hydrolysis stage on the ribosome. The sequence is that of Elongation factor Ts from Frankia casuarinae (strain DSM 45818 / CECT 9043 / HFP020203 / CcI3).